The chain runs to 892 residues: Zinc finger protein 512B (892 aa).

Positions 1–82 are disordered; it reads MTDPFCVGGR…KKGRPKAENQ (82 aa). Residues 8–19 show a composition bias toward low complexity; it reads GGRRLPGSSKSG. The C2H2-type 1; atypical zinc-finger motif lies at 105–129; sequence VKCPNSGCWLEFPSIYGLKYHYQRC. The segment at 140–163 adopts a C2H2-type 2 zinc-finger fold; sequence FPCPFCEAAFTSKTQLEKHRIWNH. 2 disordered regions span residues 323–473 and 562–582; these read MVLL…RKKV and EHSA…EERE. Positions 371–384 are enriched in polar residues; that stretch reads SMGQSSAFQLSADT. The segment covering 385-398 has biased composition (low complexity); it reads SSGSLSPGSRPSGG. Ser-409 carries the post-translational modification Phosphoserine. Residues 418 to 428 show a composition bias toward basic residues; the sequence is TKHRRKQKTPK. The NuRD interaction motif motif lies at 421–427; the sequence is RRKQKTP. The segment at 540–563 adopts a C2H2-type 3 zinc-finger fold; that stretch reads LKCQHCRKQFKSKAGLNYHTMAEH. The C2H2-type 4; atypical zinc-finger motif lies at 594–618; sequence LRCPQEGCGAAFSSLMGYQYHQRRC. The segment at 630–653 adopts a C2H2-type 5 zinc-finger fold; the sequence is FPCTHCGKTYRSKAGHDYHVRSEH. The disordered stretch occupies residues 649–682; that stretch reads VRSEHTAPPPEEPTDKSPEAEDPLGVERTPSGRV. Ser-686 bears the Phosphoserine mark. The C2H2-type 6; atypical zinc-finger motif lies at 750-774; it reads VNCPNDCCEAIYSSVSGLKAHLASC. The C2H2-type 7 zinc-finger motif lies at 784–807; sequence YRCLLCPKEFSSESGVKYHILKTH. The interval 812–892 is disordered; sequence FRTSADPPPK…KVGVSKAPEK (81 aa). Basic and acidic residues predominate over residues 819–831; that stretch reads PPKHRSQDSLVPK. Positions 832–849 are enriched in basic residues; that stretch reads KEKKKNLAGGKKRGRKPK. Over residues 850-876 the composition is skewed to basic and acidic residues; that stretch reads ERTPEEPVAKLPPRRDDWPPGCRDKGA.

It belongs to the krueppel C2H2-type zinc-finger protein family. Interacts (via its NuRD interaction motif) with RBBP4 of the nucleosome remodeling and deacetylase (NuRD) complex; the interaction is direct and may play a role in repressing gene expression.

The protein resides in the nucleus. Its function is as follows. Involved in transcriptional regulation by repressing gene expression. Associates with the nucleosome remodeling and histone deacetylase (NuRD) complex, which promotes transcriptional repression by histone deacetylation and nucleosome remodeling. In Homo sapiens (Human), this protein is Zinc finger protein 512B (ZNF512B).